The sequence spans 507 residues: MKLRVHNTLSGLKEEFFPLSSEVVRMYVCGPTVYDVPHIGNIRASVVYDIVYRVLLKLFPEVIYVRNITDVDDKIITAASVRGVKCDKVALHYEHIFHEHLGLLNCLSPTVEPKATQNIGKMISMIQALIDNGNAYSVGGNVYFDVGSFAEYGVLSKRKKEQLVYGVRVEKDVDKKHPGDFILWKSDDHVYWPSPWGNGRPGWHIECSAMTLATLGADFDIHGGGADLKFPHHENERAQSMCANPGSQFARYWVHNGFLTVNGEKMSKSLGNVVNVDTLVESGVTPNVIRFVLISTHYSKPLDWNDAMVGEAINSLIKFKLALLDSGVLPKSKSHIGSLNIGVCSDNAEDEEVDPRSCASEVIVARNKRKAKNFSKKMNEIFNKFGGLGDDCSIYTREFFECMADDFNTPGAIAVLHKLSDGVRLVGAEKVNNLAHLLYNLLIFLGIDLGVRQSSVSEDFIRSQLQKRADCKRQKDFVEADRIRFALAKMGVLIRDHKHAPTDWVSL.

Cys29 is a binding site for Zn(2+). The short motif at 31–41 (PTVYDVPHIGN) is the 'HIGH' region element. Cys207, His232, and Glu236 together coordinate Zn(2+). The 'KMSKS' region signature appears at 265–269 (KMSKS). Residue Lys268 coordinates ATP.

It belongs to the class-I aminoacyl-tRNA synthetase family. Monomer. Requires Zn(2+) as cofactor.

It is found in the cytoplasm. It carries out the reaction tRNA(Cys) + L-cysteine + ATP = L-cysteinyl-tRNA(Cys) + AMP + diphosphate. The sequence is that of Cysteine--tRNA ligase from Neorickettsia sennetsu (strain ATCC VR-367 / Miyayama) (Ehrlichia sennetsu).